A 109-amino-acid chain; its full sequence is Transcription initiation factor IIA subunit 2 (109 aa).

It belongs to the TFIIA subunit 2 family. TFIIA is a heterodimer of the large unprocessed subunit 1 and a small subunit gamma. It was originally believed to be a heterotrimer of an alpha (p35), a beta (p19) and a gamma subunit (p12). Interacts with NCOA6 general coactivator. TFIIA forms a complex with TBP. Interacts with HSF1 (via transactivation domain). Part of TBP-based Pol II pre-initiation complex (PIC), in which Pol II core assembles with general transcription factors and other specific initiation factors including GTF2E1, GTF2E2, GTF2F1, GTF2F2, TCEA1, ERCC2, ERCC3, GTF2H2, GTF2H3, GTF2H4, GTF2H5, GTF2A1, GTF2A2, GTF2B and TBP; this large multi-subunit PIC complex mediates DNA unwinding and targets Pol II core to the transcription start site where the first phosphodiester bond forms. As to quaternary structure, (Microbial infection) Interacts with SV40 Large T antigen.

It localises to the nucleus. Functionally, TFIIA is a component of the transcription machinery of RNA polymerase II and plays an important role in transcriptional activation. TFIIA in a complex with TBP mediates transcriptional activity. The chain is Transcription initiation factor IIA subunit 2 (GTF2A2) from Homo sapiens (Human).